The chain runs to 120 residues: Large ribosomal subunit protein bL17 (120 aa).

Belongs to the bacterial ribosomal protein bL17 family. As to quaternary structure, part of the 50S ribosomal subunit. Contacts protein L32.

This Bacillus subtilis (strain 168) protein is Large ribosomal subunit protein bL17.